The sequence spans 414 residues: Serine hydroxymethyltransferase (414 aa).

Residues leucine 117 and 121-123 each bind (6S)-5,6,7,8-tetrahydrofolate; that span reads GHL. Position 226 is an N6-(pyridoxal phosphate)lysine (lysine 226).

This sequence belongs to the SHMT family. In terms of assembly, homodimer. Pyridoxal 5'-phosphate is required as a cofactor.

The protein resides in the cytoplasm. It catalyses the reaction (6R)-5,10-methylene-5,6,7,8-tetrahydrofolate + glycine + H2O = (6S)-5,6,7,8-tetrahydrofolate + L-serine. Its pathway is one-carbon metabolism; tetrahydrofolate interconversion. The protein operates within amino-acid biosynthesis; glycine biosynthesis; glycine from L-serine: step 1/1. Catalyzes the reversible interconversion of serine and glycine with tetrahydrofolate (THF) serving as the one-carbon carrier. This reaction serves as the major source of one-carbon groups required for the biosynthesis of purines, thymidylate, methionine, and other important biomolecules. Also exhibits THF-independent aldolase activity toward beta-hydroxyamino acids, producing glycine and aldehydes, via a retro-aldol mechanism. The sequence is that of Serine hydroxymethyltransferase from Dictyoglomus thermophilum (strain ATCC 35947 / DSM 3960 / H-6-12).